The primary structure comprises 1567 residues: Transmembrane protein 131 homolog (1567 aa).

Residues 1 to 32 form the signal peptide; that stretch reads MPTQVQMRPLLRIFAEPILLILIFLFTLGAKG. The Lumenal portion of the chain corresponds to 33-1049; it reads EKVLQETFLG…RPGWESSLKN (1017 aa). Positions 55-228 are papD-L domain; it reads RLVPSRLDFG…TLKPVIRISF (174 aa). Asparagine 84, asparagine 114, asparagine 168, asparagine 235, asparagine 316, asparagine 317, asparagine 342, asparagine 372, asparagine 409, asparagine 462, asparagine 563, asparagine 890, and asparagine 1013 each carry an N-linked (GlcNAc...) asparagine glycan. A helical membrane pass occupies residues 1050 to 1070; it reads AALVVLLASFGLVLVAAVFDA. The Cytoplasmic portion of the chain corresponds to 1071-1567; it reads KAIMVQQNAY…SQRNNHNHMN (497 aa). Residues 1096–1130 are a coiled coil; the sequence is RNIVKLQAEEAAAKAESVQQQQKVKNGQLKELRKR. 3 disordered regions span residues 1112–1337, 1364–1386, and 1502–1567; these read SVQQ…SPDA, PTDN…IGDN, and PGLE…NHMN. Composition is skewed to low complexity over residues 1132–1150 and 1166–1183; these read VVNS…SPWS and KTVV…APAA. Serine 1201 and serine 1258 each carry phosphoserine. A compositionally biased stretch (polar residues) spans 1247-1259; the sequence is AKSSPPQQENISP. The span at 1284–1298 shows a compositional bias: basic and acidic residues; it reads PGRERERERRSKDQK. The span at 1319-1331 shows a compositional bias: polar residues; that stretch reads KLNFGQTTNSTSP. 2 stretches are compositionally biased toward polar residues: residues 1507–1519 and 1536–1561; these read SARQ…QEQV and LPTQ…SQRN.

This sequence belongs to the TMEM131 family. In terms of assembly, may interact (via PapD-L domain) with collagen proteins (via C-terminus); the interaction is direct and is involved in assembly and TRAPPIII ER-to-Golgi transport complex-dependent secretion of collagen.

It localises to the membrane. Functionally, collagen binding transmembrane protein involved in collagen secretion, probably by recruiting the ER-to-Golgi transport complex TRAPPIII. The chain is Transmembrane protein 131 homolog from Drosophila melanogaster (Fruit fly).